The chain runs to 118 residues: UPF0102 protein STH1475 (118 aa).

The protein belongs to the UPF0102 family.

This chain is UPF0102 protein STH1475, found in Symbiobacterium thermophilum (strain DSM 24528 / JCM 14929 / IAM 14863 / T).